Reading from the N-terminus, the 81-residue chain is Putative membrane protein insertion efficiency factor (81 aa).

The protein belongs to the UPF0161 family.

It is found in the cell inner membrane. Its function is as follows. Could be involved in insertion of integral membrane proteins into the membrane. The protein is Putative membrane protein insertion efficiency factor of Pseudomonas syringae pv. tomato (strain ATCC BAA-871 / DC3000).